An 89-amino-acid polypeptide reads, in one-letter code: Putative RING finger protein 121R (89 aa).

The RING-type zinc-finger motif lies at 45–78 (CPICLIAKVNTVLECTHVLCSNCVKKINVCPICR).

This chain is Putative RING finger protein 121R, found in Invertebrate iridescent virus 6 (IIV-6).